Consider the following 330-residue polypeptide: Complement factor H-related protein 1 (330 aa).

Positions 1-18 (MWLLVSVILISRISSVGG) are cleaved as a signal peptide. Sushi domains follow at residues 22–84 (FCDF…PKCL), 85–142 (RLCF…KCRS), 145–203 (TSCV…QCKD), 206–264 (GKCG…KCLH), and 273–329 (MENY…TCAK). 10 disulfide bridges follow: C23–C72, C55–C83, C87–C129, C114–C140, C147–C190, C176–C201, C208–C251, C237–C262, C266–C317, and C300–C327. An N-linked (GlcNAc...) asparagine glycan is attached at N126. N194 carries N-linked (GlcNAc...) asparagine glycosylation.

Head-to-tail homodimer and heterodimer with CFHR2 or CFHR5. In terms of assembly, (Microbial infection) Interacts with C.albicans GPD2; the interaction is direct and leads to the degradation of C3. In terms of processing, N-glycosylated. Two forms are observed; one with a single side chain and the other with two. As to expression, expressed by the liver and secreted in plasma.

It is found in the secreted. Involved in complement regulation. The dimerized forms have avidity for tissue-bound complement fragments and efficiently compete with the physiological complement inhibitor CFH. Can associate with lipoproteins and may play a role in lipid metabolism. This is Complement factor H-related protein 1 (CFHR1) from Homo sapiens (Human).